A 246-amino-acid polypeptide reads, in one-letter code: tRNA pseudouridine synthase A (246 aa).

Asp-52 (nucleophile) is an active-site residue. A substrate-binding site is contributed by Tyr-111.

It belongs to the tRNA pseudouridine synthase TruA family. Homodimer.

It catalyses the reaction uridine(38/39/40) in tRNA = pseudouridine(38/39/40) in tRNA. Formation of pseudouridine at positions 38, 39 and 40 in the anticodon stem and loop of transfer RNAs. This is tRNA pseudouridine synthase A from Rhodopseudomonas palustris (strain BisA53).